A 370-amino-acid polypeptide reads, in one-letter code: Metallophosphoesterase 1 homolog (370 aa).

Residues 7 to 27 form a helical membrane-spanning segment; sequence CFVIVLCALIFCEYVADFVVL. 6 residues coordinate a divalent metal cation: aspartate 52, aspartate 94, asparagine 132, histidine 225, histidine 275, and histidine 277. Residues 328–348 traverse the membrane as a helical segment; sequence FVFNSYLSAGILCLIVIGFQL.

The protein belongs to the metallophosphoesterase superfamily. MPPE1 family. Requires Mn(2+) as cofactor.

The protein resides in the membrane. In terms of biological role, metallophosphoesterase. This Drosophila melanogaster (Fruit fly) protein is Metallophosphoesterase 1 homolog (PGAP5).